The chain runs to 375 residues: All-trans-retinol dehydrogenase [NAD(+)] ADH1B (375 aa).

N-acetylserine is present on S2. A Phosphoserine modification is found at S23. Y35 bears the Phosphotyrosine mark. Positions 47, 68, 98, 101, 104, 112, and 175 each coordinate Zn(2+). NAD(+)-binding positions include 200 to 205, D224, K229, 293 to 295, and R370; these read GLGGVG and VGV.

This sequence belongs to the zinc-containing alcohol dehydrogenase family. Dimer of identical or non-identical chains of three types; alpha, beta and gamma. Zn(2+) serves as cofactor.

Its subcellular location is the cytoplasm. It carries out the reaction all-trans-retinol + NAD(+) = all-trans-retinal + NADH + H(+). It catalyses the reaction all-trans-4-hydroxyretinol + NAD(+) = all-trans-4-hydroxyretinal + NADH + H(+). The enzyme catalyses all-trans-4-oxoretinol + NAD(+) = all-trans-4-oxoretinal + NADH + H(+). Functionally, catalyzes the NAD-dependent oxidation of all-trans-retinol and its derivatives such as all-trans-4-hydroxyretinol and may participate in retinoid metabolism. In vitro can also catalyze the NADH-dependent reduction of all-trans-retinal and its derivatives such as all-trans-4-oxoretinal. Catalyzes in the oxidative direction with higher efficiency. Has the same affinity for all-trans-4-hydroxyretinol and all-trans-4-oxoretinal. In Homo sapiens (Human), this protein is All-trans-retinol dehydrogenase [NAD(+)] ADH1B.